Consider the following 316-residue polypeptide: Meiotically up-regulated gene 154 protein (316 aa).

A run of 4 helical transmembrane segments spans residues 41 to 61, 88 to 108, 159 to 179, and 186 to 206; these read YSIPFSLAVNFIFLLMRIYIK, AFLSFLSICFLFISFLNFIFS, FLLNFACLFSPAHALILWFYS, and LLTFLLSFTTLHFVNKFSLLL. Positions 291-316 are disordered; that stretch reads HDSGISRDSSSPFKRFPHLSDGSSRF.

It localises to the endoplasmic reticulum membrane. In terms of biological role, has a role in meiosis. The polypeptide is Meiotically up-regulated gene 154 protein (mug154) (Schizosaccharomyces pombe (strain 972 / ATCC 24843) (Fission yeast)).